We begin with the raw amino-acid sequence, 493 residues long: Na(+)/H(+) antiporter subunit D (493 aa).

15 helical membrane-spanning segments follow: residues 3 to 23 (NFVI…IFMT), 31 to 51 (IFST…VQTV), 77 to 97 (FASL…LYSF), 107 to 127 (SFYY…FLTG), 129 to 149 (LFNM…LIVL), 163 to 183 (IVFN…LYAV), 203 to 223 (GLIT…GGIF), 227 to 247 (FWLP…FGAL), 251 to 271 (VGLY…TAFT), 274 to 294 (LMIW…LAYS), 299 to 319 (IVIY…AVHT), 330 to 350 (LIHD…LIAL), 370 to 390 (GWMF…SGFV), 407 to 427 (ISML…RIFI), and 449 to 469 (LYPA…TEWV).

It belongs to the CPA3 antiporters (TC 2.A.63) subunit D family. Forms a heterooligomeric complex that consists of seven subunits: MrpA, MrpB, MrpC, MrpD, MrpE, MrpF and MrpG.

The protein localises to the cell membrane. Its function is as follows. Mrp complex is a Na(+)/H(+) antiporter that is considered to be the major Na(+) excretion system in B.subtilis. Has a major role in Na(+) resistance and a minor role in Na(+)- and K(+)-dependent pH homeostasis as compared to TetB. MrpA may be the actual Na(+)/H(+) antiporter, although the six other Mrp proteins are all required for Na(+)/H(+) antiport activity and Na(+) resistance. MrpA is required for initiation of sporulation when external Na(+) concentration increases. Also transports Li(+) but not K(+), Ca(2+) or Mg(2+). This Bacillus subtilis (strain 168) protein is Na(+)/H(+) antiporter subunit D (mrpD).